Reading from the N-terminus, the 361-residue chain is 5-formaminoimidazole-4-carboxamide-1-(beta)-D-ribofuranosyl 5'-monophosphate synthetase (361 aa).

Residues His-27 and Ser-94 each coordinate 5-amino-1-(5-phospho-beta-D-ribosyl)imidazole-4-carboxamide. An ATP-grasp domain is found at 116-348 (RAILRWEAER…MGQRIAKEIK (233 aa)). Residues 146-208 (PDEI…ANYC) and Glu-230 contribute to the ATP site. Position 258 (Asn-258) interacts with 5-amino-1-(5-phospho-beta-D-ribosyl)imidazole-4-carboxamide. Mg(2+)-binding residues include Gln-297 and Glu-310.

It belongs to the phosphohexose mutase family. Mg(2+) serves as cofactor. The cofactor is Mn(2+).

The enzyme catalyses 5-amino-1-(5-phospho-beta-D-ribosyl)imidazole-4-carboxamide + formate + ATP = 5-formamido-1-(5-phospho-D-ribosyl)imidazole-4-carboxamide + ADP + phosphate. It functions in the pathway purine metabolism; IMP biosynthesis via de novo pathway; 5-formamido-1-(5-phospho-D-ribosyl)imidazole-4-carboxamide from 5-amino-1-(5-phospho-D-ribosyl)imidazole-4-carboxamide (formate route): step 1/1. In terms of biological role, catalyzes the ATP- and formate-dependent formylation of 5-aminoimidazole-4-carboxamide-1-beta-d-ribofuranosyl 5'-monophosphate (AICAR) to 5-formaminoimidazole-4-carboxamide-1-beta-d-ribofuranosyl 5'-monophosphate (FAICAR) in the absence of folates. This chain is 5-formaminoimidazole-4-carboxamide-1-(beta)-D-ribofuranosyl 5'-monophosphate synthetase, found in Methanococcus maripaludis (strain DSM 14266 / JCM 13030 / NBRC 101832 / S2 / LL).